The sequence spans 261 residues: Glucose 1-dehydrogenase (261 aa).

11–35 (AITGAASGLGKAMAIRFGKEQAKVV) serves as a coordination point for NADP(+). Residue Ser145 participates in substrate binding. Tyr158 functions as the Proton acceptor in the catalytic mechanism.

Belongs to the short-chain dehydrogenases/reductases (SDR) family. In terms of assembly, homotetramer.

It catalyses the reaction D-glucose + NAD(+) = D-glucono-1,5-lactone + NADH + H(+). The enzyme catalyses D-glucose + NADP(+) = D-glucono-1,5-lactone + NADPH + H(+). The sequence is that of Glucose 1-dehydrogenase (gdh) from Bacillus subtilis (strain 168).